Reading from the N-terminus, the 264-residue chain is Glycerol uptake facilitator protein (264 aa).

Over 1-3 the chain is Cytoplasmic; that stretch reads MDK. Residues 4–32 traverse the membrane as a helical segment; sequence SLKANCIGEFLGTALLIFFGVGCVAALKV. The Periplasmic segment spans residues 33–37; it reads AGASF. Residues 38–58 traverse the membrane as a helical segment; it reads GLWEISIMWGMGVALAVYATA. Residues 59–61 lie on the Cytoplasmic side of the membrane; the sequence is GLS. Residues 62–65 lie within the membrane without spanning it; that stretch reads GAHL. Residues 66–68 carry the NPA 1 motif; the sequence is NPA. Residues 66 to 76 constitute an intramembrane region (helical); sequence NPAVTIALWKF. Topologically, residues 77–82 are cytoplasmic; it reads ACFDGK. The chain crosses the membrane as a helical span at residues 83–106; it reads KVIPYIISQMLGAFFAAALVYALY. Residues 107–141 lie on the Periplasmic side of the membrane; sequence RNVFIDYETVHNIVRGTQESLSLAGTFSTYPHPSL. Residues 142–167 traverse the membrane as a helical segment; it reads SIGGAFAVEFVITAILMALIMALTDD. The Cytoplasmic portion of the chain corresponds to 168-175; the sequence is GNGVPRGP. Residues 176–192 traverse the membrane as a helical segment; sequence LAPLLIGILIAVIGGAM. The Periplasmic portion of the chain corresponds to 193-196; sequence GPLT. Residues 197-200 lie within the membrane without spanning it; sequence GFAM. An NPA 2 motif is present at residues 201-203; it reads NPA. The segment at residues 201-214 is an intramembrane region (helical); that stretch reads NPARDFGPKFFAYL. Over 215–229 the chain is Periplasmic; that stretch reads AGWGELALTGGREIP. The chain crosses the membrane as a helical span at residues 230–252; the sequence is YFIVPMVAPVLGALAGAWLYKKA. The Cytoplasmic portion of the chain corresponds to 253–264; sequence IGGNLPCNCGCE.

The protein belongs to the MIP/aquaporin (TC 1.A.8) family.

The protein resides in the cell inner membrane. The catalysed reaction is glycerol(in) = glycerol(out). Functionally, mediates glycerol diffusion across the cytoplasmic membrane via a pore-type mechanism. This Haemophilus influenzae (strain ATCC 51907 / DSM 11121 / KW20 / Rd) protein is Glycerol uptake facilitator protein (glpF).